The primary structure comprises 210 residues: Dephospho-CoA kinase (210 aa).

The region spanning 15–210 is the DPCK domain; sequence VLGLTGGIGC…HKGYLKLALK (196 aa). 23-28 is a binding site for ATP; that stretch reads GCGKTA.

Belongs to the CoaE family.

It localises to the cytoplasm. It carries out the reaction 3'-dephospho-CoA + ATP = ADP + CoA + H(+). It functions in the pathway cofactor biosynthesis; coenzyme A biosynthesis; CoA from (R)-pantothenate: step 5/5. In terms of biological role, catalyzes the phosphorylation of the 3'-hydroxyl group of dephosphocoenzyme A to form coenzyme A. The polypeptide is Dephospho-CoA kinase (Pseudoalteromonas translucida (strain TAC 125)).